The primary structure comprises 90 residues: Small ribosomal subunit protein uS15 (90 aa).

This sequence belongs to the universal ribosomal protein uS15 family. Part of the 30S ribosomal subunit. Forms a bridge to the 50S subunit in the 70S ribosome, contacting the 23S rRNA.

Its function is as follows. One of the primary rRNA binding proteins, it binds directly to 16S rRNA where it helps nucleate assembly of the platform of the 30S subunit by binding and bridging several RNA helices of the 16S rRNA. In terms of biological role, forms an intersubunit bridge (bridge B4) with the 23S rRNA of the 50S subunit in the ribosome. This Herpetosiphon aurantiacus (strain ATCC 23779 / DSM 785 / 114-95) protein is Small ribosomal subunit protein uS15.